A 373-amino-acid chain; its full sequence is LIM domain-binding protein 2 (373 aa).

Disordered stretches follow at residues 244 to 287 (APPA…KTPA) and 327 to 373 (QYDA…QASQ). The span at 263–280 (STSSTSNSSAGNTTNSAG) shows a compositional bias: low complexity. An LIM interaction domain (LID) domain is found at 298–337 (DVMVVGEPTLMGGEFGDEDERLITRLENTQYDAANGMDDE). Residues 341–373 (NNSPALGNNSPWNSKPPATQETKSENAPPQASQ) show a composition bias toward polar residues.

It belongs to the LDB family. As to quaternary structure, interacts with LHX9. Interacts with SLK; leading to negatively regulate SLK kinase activity. Interacts with LMO4. Interacts with PITX1. Interacts with LHX3. Ubiquitinated by RLIM/RNF12, leading to its degradation by the proteasome. In terms of tissue distribution, expressed in multiple tissues including heart, brain, liver, kidney, testis, lung and muscle, with expression highest in the brain, trigeminal ganglia, and lung.

The protein localises to the nucleus. Its function is as follows. Transcription cofactor. Binds to the LIM domain of a wide variety of LIM domain-containing transcription factors. Functionally, regulates the transcriptional activity of LIM-containing proteins such as LHX3 or PITX1. The sequence is that of LIM domain-binding protein 2 (Ldb2) from Mus musculus (Mouse).